Here is a 488-residue protein sequence, read N- to C-terminus: Membrane-bound lytic murein transglycosylase F (488 aa).

An N-terminal signal peptide occupies residues 1–25; that stretch reads MFARPAIRMRCATGLLAIGTLLMLA. Residues 26 to 269 form a non-LT domain region; sequence GCGEEPKPSV…RLKERYYGHV (244 aa). The LT domain stretch occupies residues 270–488; the sequence is DVLGYVGAYT…RTLDEQTPPL (219 aa). E316 is an active-site residue.

The protein in the N-terminal section; belongs to the bacterial solute-binding protein 3 family. This sequence in the C-terminal section; belongs to the transglycosylase Slt family.

Its subcellular location is the cell outer membrane. It catalyses the reaction Exolytic cleavage of the (1-&gt;4)-beta-glycosidic linkage between N-acetylmuramic acid (MurNAc) and N-acetylglucosamine (GlcNAc) residues in peptidoglycan, from either the reducing or the non-reducing ends of the peptidoglycan chains, with concomitant formation of a 1,6-anhydrobond in the MurNAc residue.. Functionally, murein-degrading enzyme that degrades murein glycan strands and insoluble, high-molecular weight murein sacculi, with the concomitant formation of a 1,6-anhydromuramoyl product. Lytic transglycosylases (LTs) play an integral role in the metabolism of the peptidoglycan (PG) sacculus. Their lytic action creates space within the PG sacculus to allow for its expansion as well as for the insertion of various structures such as secretion systems and flagella. This is Membrane-bound lytic murein transglycosylase F from Ectopseudomonas mendocina (strain ymp) (Pseudomonas mendocina).